The chain runs to 132 residues: UPF0201 protein MTH_433 (132 aa).

Belongs to the UPF0201 family.

This is UPF0201 protein MTH_433 from Methanothermobacter thermautotrophicus (strain ATCC 29096 / DSM 1053 / JCM 10044 / NBRC 100330 / Delta H) (Methanobacterium thermoautotrophicum).